A 203-amino-acid chain; its full sequence is Large ribosomal subunit protein uL3 (203 aa).

The protein belongs to the universal ribosomal protein uL3 family. In terms of assembly, part of the 50S ribosomal subunit. Forms a cluster with proteins L14 and L19.

Its function is as follows. One of the primary rRNA binding proteins, it binds directly near the 3'-end of the 23S rRNA, where it nucleates assembly of the 50S subunit. This is Large ribosomal subunit protein uL3 from Christiangramia forsetii (strain DSM 17595 / CGMCC 1.15422 / KT0803) (Gramella forsetii).